We begin with the raw amino-acid sequence, 113 residues long: U11-theraphotoxin-Hhn1a (113 aa).

The first 21 residues, methionine 1–alanine 21, serve as a signal peptide directing secretion. The propeptide occupies aspartate 22–arginine 74. 3 disulfides stabilise this stretch: cysteine 75/cysteine 90, cysteine 82/cysteine 95, and cysteine 89/cysteine 110.

It belongs to the neurotoxin 14 (magi-1) family. 01 (HNTX-16) subfamily. Expressed by the venom gland.

It is found in the secreted. Functionally, probable ion channel inhibitor. This is U11-theraphotoxin-Hhn1a from Cyriopagopus hainanus (Chinese bird spider).